A 1474-amino-acid polypeptide reads, in one-letter code: Adhesion G protein-coupled receptor L1 (1474 aa).

An N-terminal signal peptide occupies residues 1–24 (MARLAAVLWNLCVTAVLVTSATQG). Residues 25–858 (LSRAGLPFGL…EIYQGRINEL (834 aa)) are Extracellular-facing. Positions 40–129 (ACEGYPIELR…KYLEVQYDCV (90 aa)) constitute an SUEL-type lectin domain. Disulfide bonds link cysteine 41-cysteine 71, cysteine 50-cysteine 128, cysteine 83-cysteine 115, cysteine 96-cysteine 102, and cysteine 140-cysteine 322. Residue glutamate 42 coordinates alpha-L-rhamnose. N-linked (GlcNAc...) asparagine glycosylation is present at asparagine 98. Position 117–120 (117–120 (GTYK)) interacts with alpha-L-rhamnose. Residues 139–398 (VCPGTLQKVL…VVRYSLEFGP (260 aa)) enclose the Olfactomedin-like domain. The tract at residues 400-434 (DPSAGPATSPPLSTTTTARPTPLTSTASPAATTPL) is disordered. The span at 405 to 434 (PATSPPLSTTTTARPTPLTSTASPAATTPL) shows a compositional bias: low complexity. 2 disulfide bridges follow: cysteine 480–cysteine 515 and cysteine 503–cysteine 532. 6 N-linked (GlcNAc...) asparagine glycosylation sites follow: asparagine 531, asparagine 640, asparagine 742, asparagine 801, asparagine 806, and asparagine 827. Residues 669 to 851 (PARFLAAKEN…AVLMAHREIY (183 aa)) enclose the GAIN-B domain. Disulfide bonds link cysteine 802/cysteine 833 and cysteine 821/cysteine 835. The interval 802-851 (CSFWNYSERSMLGYWSTQGCRLVESNKTHTTCACSHLTNFAVLMAHREIY) is GPS. Residues 859 to 879 (LLSVITWVGIVISLVCLAICI) traverse the membrane as a helical segment. Over 880–893 (STFCFLRGLQTDRN) the chain is Cytoplasmic. Residues 894 to 914 (TIHKNLCINLFLAELLFLVGI) traverse the membrane as a helical segment. The Extracellular portion of the chain corresponds to 915-920 (DKTQYE). Residues 921-941 (IACPIFAGLLHYFFLAAFSWL) form a helical membrane-spanning segment. Residues 942–964 (CLEGVHLYLLLVEVFESEYSRTK) lie on the Cytoplasmic side of the membrane. Residues 965–985 (YYYLGGYCFPALVVGIAAAID) form a helical membrane-spanning segment. Residues 986–1002 (YRSYGTEKACWLRVDNY) are Extracellular-facing. A helical transmembrane segment spans residues 1003-1023 (FIWSFIGPVSFVIVVNLVFLM). Topologically, residues 1024–1050 (VTLHKMIRSSSVLKPDSSRLDNIKSWA) are cytoplasmic. Residues 1051–1071 (LGAIALLFLLGLTWAFGLLFI) traverse the membrane as a helical segment. At 1072 to 1075 (NKES) the chain is on the extracellular side. A helical membrane pass occupies residues 1076-1096 (VVMAYLFTTFNAFQGVFIFVF). At 1097 to 1474 (HCALQKKVHK…DGQMQLVTSL (378 aa)) the chain is on the cytoplasmic side. Arginine 1194 carries the post-translational modification Omega-N-methylarginine. Serine 1220 is modified (phosphoserine). Disordered regions lie at residues 1248 to 1273 (FNNSYSLRSGDFPPGDGGPEPPRGRN), 1294 to 1328 (RGSSSAAKGPPPPEPPVPPVPGGGGEEEAGGPGGA), 1360 to 1429 (ESES…SRPP), and 1451 to 1474 (YLAAPGLEGPGPDGDGQMQLVTSL). Pro residues-rich tracts occupy residues 1302–1314 (GPPPPEPPVPPVP) and 1408–1420 (ALPPPPPAPPGPP). Position 1473 is a phosphoserine (serine 1473).

The protein belongs to the G-protein coupled receptor 2 family. Adhesion G-protein coupled receptor (ADGR) subfamily. Forms a heterodimer, consisting of a large extracellular region (p120) non-covalently linked to a seven-transmembrane moiety (p85). Interacts with syntaxin and with proteins of the SHANK family via the PDZ domain. Interacts (via extracellular domain) with FLRT1, FLRT2 and FLRT3 (via extracellular domain). In terms of processing, autoproteolytically cleaved into 2 subunits, an extracellular subunit and a seven-transmembrane subunit. This proteolytic processing takes place early in the biosynthetic pathway, either in the endoplasmic reticulum or in the early compartment of the Golgi apparatus.

It localises to the cell membrane. It is found in the cell projection. The protein localises to the axon. Its subcellular location is the growth cone. The protein resides in the synapse. It localises to the presynaptic cell membrane. It is found in the synaptosome. Its function is as follows. Calcium-independent receptor of high affinity for alpha-latrotoxin, an excitatory neurotoxin present in black widow spider venom which triggers massive exocytosis from neurons and neuroendocrine cells. Receptor for TENM2 that mediates heterophilic synaptic cell-cell contact and postsynaptic specialization. Receptor probably implicated in the regulation of exocytosis. In Homo sapiens (Human), this protein is Adhesion G protein-coupled receptor L1.